We begin with the raw amino-acid sequence, 400 residues long: Protection of telomeres homolog 1 (400 aa).

The protein belongs to the telombin family. In terms of tissue distribution, expressed in sperm and oocytes.

It is found in the nucleus. Its subcellular location is the nucleus envelope. It localises to the chromosome. The protein localises to the telomere. Functionally, telomeric DNA-binding protein, which binds to single-stranded C-rich repeat sequences, with high specificity to the 5'-GCCTAA-3' sequence. Repeat sequence binding can be at the 5' or 3' telomeric end. May have a role in protecting the 5' end of the C-rich strand of the telomere. Acts redundantly with pot-2 to negatively regulate telomerase-mediated telomere extension. Also regulates telomere length by the telomerase-independent telomere maintenance pathway called ALT (alternative lengthening of telomeres). Through sun-1, anchors telomeres to the nuclear envelope in embryos. The polypeptide is Protection of telomeres homolog 1 (Caenorhabditis elegans).